The primary structure comprises 66 residues: uncharacterized protein (66 aa).

2 helical membrane-spanning segments follow: residues 4 to 24 (ALFI…LLIF) and 38 to 58 (LLTP…ILVL).

It localises to the membrane. This is an uncharacterized protein from Saccharomyces cerevisiae (strain ATCC 204508 / S288c) (Baker's yeast).